The following is a 234-amino-acid chain: Uridylate kinase (234 aa).

9-12 serves as a coordination point for ATP; that stretch reads KLSG. Glycine 51 is a binding site for UMP. The ATP site is built by glycine 52 and arginine 56. UMP is bound by residues aspartate 71 and 132-139; that span reads CGNPFFTT. Threonine 159, tyrosine 165, and aspartate 168 together coordinate ATP.

The protein belongs to the UMP kinase family. In terms of assembly, homohexamer.

It localises to the cytoplasm. It catalyses the reaction UMP + ATP = UDP + ADP. Its pathway is pyrimidine metabolism; CTP biosynthesis via de novo pathway; UDP from UMP (UMPK route): step 1/1. Its activity is regulated as follows. Inhibited by UTP. Its function is as follows. Catalyzes the reversible phosphorylation of UMP to UDP. This chain is Uridylate kinase, found in Prochlorococcus marinus (strain MIT 9301).